A 307-amino-acid polypeptide reads, in one-letter code: Dioxygenase swnH1 (307 aa).

Fe cation-binding residues include H149, D151, and H227.

This sequence belongs to the PhyH family. As to quaternary structure, homodimer. Requires Fe cation as cofactor.

The protein operates within mycotoxin biosynthesis. Its function is as follows. Dioxygenase; part of the gene cluster that mediates the biosynthesis of swainsonine (SW), a cytotoxic fungal alkaloid and a potential cancer therapy drug. Swainsonine production occurs via a multibranched pathway and is dispensable for fungal colonization of plants and infection of insect hosts. The first step of swainsonine biosynthesis is the production of the precursor pipecolic acid (PA) via conversion of L-lysine (Lys) to 1-piperideine-6-carboxylate (P6C) by the aminotransferase swnA, the latter being further reduced to PA by the reductase swnR. PA can be converted from lysine by both the SW biosynthetic cluster and the unclustered genes such as lysine cyclodeaminase. The PKS-NRPS hybrid synthetase swnK uptakes and condensates PA and malonyl-CoA with and without skipping of the ketoreductase (KR) domain in order to produce 3 intermediates, 1-oxoindolizidine, (1S)-1-hydroxyindolizin, and (1R)-1-hydroxyindolizine; with the transisomer (1S)-1-hydroxyindolizin being predominant. The terminal thioester reductase (TE) domain of swnK is involved in reduction of the thioester bond to release the intermediate aldehydes. The oxidoreductase swnN could contribute to the reduction of 1-oxoindolizidine to (1S)-1-hydroxyindolizin and (1R)-1-hydroxyindolizine, contributing to the major route of SW production. The dioxygenase swnH2 would be responsible for the oxidization of (1R)-1-hydroxyindolizine into (1R,2S)-1,2-dihydroxyindolizine and of (1S)-1-hydroxyindolizin to yield both (1R,2S)-1,2-dihydroxyindolizine and (1S,2S)-1,2-dihydroxyindolizine. The dioxygenase swnH1 then performs the conversion of the 1,2-dihydroxyindolizine epimers to SW. This is Dioxygenase swnH1 from Metarhizium robertsii (strain ARSEF 23 / ATCC MYA-3075) (Metarhizium anisopliae (strain ARSEF 23)).